Consider the following 140-residue polypeptide: Probable NADH dehydrogenase [ubiquinone] iron-sulfur protein 6, mitochondrial (140 aa).

It belongs to the complex I NDUFS6 subunit family. Complex I is composed of 45 different subunits. This is a component of the iron-sulfur (IP) fragment of the enzyme.

The protein localises to the mitochondrion inner membrane. In terms of biological role, accessory subunit of the mitochondrial membrane respiratory chain NADH dehydrogenase (Complex I), that is believed not to be involved in catalysis. Complex I functions in the transfer of electrons from NADH to the respiratory chain. The immediate electron acceptor for the enzyme is believed to be ubiquinone. This chain is Probable NADH dehydrogenase [ubiquinone] iron-sulfur protein 6, mitochondrial (nduf-6), found in Caenorhabditis elegans.